Here is a 243-residue protein sequence, read N- to C-terminus: Adenylate kinase 4 (243 aa).

40 to 45 (GSGKGT) contacts ATP. Positions 60–89 (ATGDMLRAAVAAKTPLGVKAKEAMDKGELV) are NMP. Residues Thr-61, Arg-66, 87-89 (ELV), 115-118 (GFPR), and Gln-122 each bind AMP. Positions 156–193 (GRWIHPSSGRSYHTKFAPPKVPGVDDVTGEPLIQRKDD) are LID. Position 157 (Arg-157) interacts with ATP. Residues Arg-190 and Arg-201 each contribute to the AMP site.

It belongs to the adenylate kinase family.

It is found in the cytoplasm. It carries out the reaction AMP + ATP = 2 ADP. Its function is as follows. Catalyzes the reversible transfer of the terminal phosphate group between ATP and AMP. Plays an important role in cellular energy homeostasis and in adenine nucleotide metabolism. The chain is Adenylate kinase 4 (ADK-B) from Oryza sativa subsp. japonica (Rice).